We begin with the raw amino-acid sequence, 859 residues long: Photoactivated adenylate cyclase subunit beta (859 aa).

Positions 56-149 (LRRLMYLSKS…GRMYGDWHMK (94 aa)) constitute a BLUF 1 domain. The Guanylate cyclase 1 domain maps to 205-333 (VVTFIYLVEF…DCINTTSRIA (129 aa)). The interval 420-443 (RPPIFDDTPKGNPRPRTPGYGGRQ) is disordered. The BLUF 2 domain maps to 471 to 563 (LTTLTYISQA…RVYPSEWTLT (93 aa)). Positions 619 to 748 (VMLATDICSF…AVSARVMEVE (130 aa)) constitute a Guanylate cyclase 2 domain. Residues 813-859 (AARSGEKPLTEPEEAKPDFRVSPGRVRHGDSGRRSNSAQGKRSIQVR) form a disordered region. Over residues 815-831 (RSGEKPLTEPEEAKPDF) the composition is skewed to basic and acidic residues. Polar residues predominate over residues 846-859 (RSNSAQGKRSIQVR).

This sequence belongs to the adenylyl cyclase class-4/guanylyl cyclase family. In terms of assembly, heterotetramer of two alpha and two beta subunits. It depends on FAD as a cofactor.

It is found in the cell projection. The protein resides in the cilium. The protein localises to the flagellum. The catalysed reaction is ATP = 3',5'-cyclic AMP + diphosphate. Its activity is regulated as follows. Activity increased by up to 80-fold under blue light. Acts as a blue light photoreceptor for the step-up photophobic response. Mediates photoavoidance. This chain is Photoactivated adenylate cyclase subunit beta, found in Euglena gracilis.